We begin with the raw amino-acid sequence, 676 residues long: Translation initiation factor IF-2, mitochondrial (676 aa).

Residues 143-326 form the tr-type G domain; the sequence is KRAPVVTIMG…MDIRAENSPK (184 aa). Residues 152–159 form a G1 region; that stretch reads GHVDHGKT. 152 to 159 is a binding site for GTP; the sequence is GHVDHGKT. Positions 177–181 are G2; sequence GITQH. GTP-binding positions include 200 to 203 and 254 to 257; these read DTPG and TKID. Residues 200–203 are G3; the sequence is DTPG. The tract at residues 254–257 is G4; the sequence is TKID. The segment at 296-298 is G5; that stretch reads SAK.

The protein belongs to the TRAFAC class translation factor GTPase superfamily. Classic translation factor GTPase family. IF-2 subfamily.

The protein resides in the mitochondrion. Functionally, one of the essential components for the initiation of protein synthesis. Protects formylmethionyl-tRNA from spontaneous hydrolysis and promotes its binding to the 30S ribosomal subunits. Also involved in the hydrolysis of GTP during the formation of the 70S ribosomal complex. This chain is Translation initiation factor IF-2, mitochondrial (IFM1), found in Saccharomyces cerevisiae (strain ATCC 204508 / S288c) (Baker's yeast).